Consider the following 467-residue polypeptide: MTTTTRMDYETTLKGKYPAKRHAQRVADYIRNKVPGASGVLYLEGRATKLLEDNDEAEPFRQRRYFYYLTGCPLADCHYMYDIDADKSTLFIPPIDPESVIWSGLPVSADEAKQNWDVDEVKYTSDVNATLAHVGSEKPKGASVFAIPNQVSDKITFLEFDNKNFSILKEAIEVTRVVKDEYELAIMAKANEISSDGHKAVMQKVKHVQNERELEAVFLGHCIAKGSRNQAYHSIVASGRAAATLHYVPNNADMAGKLNLLLDAGGEWDCYASDITRTFPINGKFTKESREVYDIVLKMQNDCIAALKEGVLWDDVHLLAHKIAIDGLLQIGILQGDKDEILESRTSVAFFPHGLGHYLGMDTHDTGGNPNYADKDTMFRYLRVRGRLPAGSVITVEPGIYFCNFIIEPFLKDPKHSKYINADVLEKYWDVGGVRIEDNLVITKDGTYNLTTAPKDPEEMEKIIQQS.

Mn(2+)-binding residues include Asp-263, Asp-274, Glu-397, and Glu-437.

It belongs to the peptidase M24B family. It depends on Mn(2+) as a cofactor.

It carries out the reaction Release of any N-terminal amino acid, including proline, that is linked to proline, even from a dipeptide or tripeptide.. Catalyzes the removal of a penultimate prolyl residue from the N-termini of peptides. This Sordaria macrospora (strain ATCC MYA-333 / DSM 997 / K(L3346) / K-hell) protein is Probable Xaa-Pro aminopeptidase SMAC_04549.